A 66-amino-acid polypeptide reads, in one-letter code: Large ribosomal subunit protein bL33c (66 aa).

It belongs to the bacterial ribosomal protein bL33 family.

Its subcellular location is the plastid. The protein resides in the chloroplast. The protein is Large ribosomal subunit protein bL33c of Drimys granadensis.